Here is a 386-residue protein sequence, read N- to C-terminus: Branched-chain-amino-acid aminotransferase, cytosolic (386 aa).

Met-1 carries the post-translational modification N-acetylmethionine. Lys-222 carries the post-translational modification N6-(pyridoxal phosphate)lysine.

It belongs to the class-IV pyridoxal-phosphate-dependent aminotransferase family. As to quaternary structure, homodimer. Pyridoxal 5'-phosphate is required as a cofactor. As to expression, expressed in brain and kidney. Overexpressed in MYC-induced brain tumors, lymphomas, as well as in a teratocarcinoma cell line.

Its subcellular location is the cytoplasm. It carries out the reaction L-leucine + 2-oxoglutarate = 4-methyl-2-oxopentanoate + L-glutamate. The enzyme catalyses L-isoleucine + 2-oxoglutarate = (S)-3-methyl-2-oxopentanoate + L-glutamate. It catalyses the reaction L-valine + 2-oxoglutarate = 3-methyl-2-oxobutanoate + L-glutamate. Its function is as follows. Catalyzes the first reaction in the catabolism of the essential branched chain amino acids leucine, isoleucine, and valine. This chain is Branched-chain-amino-acid aminotransferase, cytosolic (Bcat1), found in Mus musculus (Mouse).